A 439-amino-acid chain; its full sequence is Fibulin-7 (439 aa).

Residues 1 to 24 (MVPSSPRALFLLLLILACPEPRAS) form the signal peptide. The stretch at 28 to 53 (LSKQQLLSAIRQLQQLLKGQETRFAE) forms a coiled coil. Residues 79 to 136 (VSCPALNTPADGRKFGSKYLVDHEVHFTCNPGFRLVGPSSVVCLPNGTWTGEQPHCRG) enclose the Sushi domain. 11 disulfide bridges follow: C81–C121, C107–C134, C140–C151, C145–C160, C162–C171, C228–C244, C240–C253, C255–C268, C274–C287, C281–C296, and C301–C318. The N-linked (GlcNAc...) asparagine glycan is linked to N124. Positions 136 to 172 (GISECSSQPCQNGGTCVEGVNQYRCICPPGRTGNRCQ) constitute an EGF-like 1; calcium-binding domain. The EGF-like 2; calcium-binding domain maps to 224–269 (DVNECELYGQEGRPRLCMHACVNTPGSYRCTCPGGYRTLADGKSCE). The EGF-like 3; calcium-binding domain maps to 270-319 (DVDECVGLQPVCPQGTTCINTGGSFQCVSPECPEGSGNVSYVKTSPFQCE). A glycan (N-linked (GlcNAc...) asparagine) is linked at N307.

The protein belongs to the fibulin family. As to quaternary structure, interacts with heparin, FBLN1, FN1 and DSPP. Preferentially binds dental mesenchyme cells and odontoblasts but not dental epithelial cells or nondental cells. Binding requires a heparan sulfate-containing receptor on the cell surface as well as an integrin. Post-translationally, N-glycosylated.

The protein resides in the secreted. Its subcellular location is the extracellular space. It is found in the extracellular matrix. Functionally, an adhesion molecule that interacts with extracellular matrix molecules in developing teeth and may play important roles in differentiation and maintenance of odontoblasts as well as in dentin formation. In Homo sapiens (Human), this protein is Fibulin-7 (FBLN7).